We begin with the raw amino-acid sequence, 112 residues long: Large ribosomal subunit protein eL34A (112 aa).

It belongs to the eukaryotic ribosomal protein eL34 family. In terms of assembly, component of the large ribosomal subunit (LSU). Mature yeast ribosomes consist of a small (40S) and a large (60S) subunit. The 40S small subunit contains 1 molecule of ribosomal RNA (18S rRNA) and at least 33 different proteins. The large 60S subunit contains 3 rRNA molecules (25S, 5.8S and 5S rRNA) and at least 46 different proteins.

The protein resides in the cytoplasm. Component of the ribosome, a large ribonucleoprotein complex responsible for the synthesis of proteins in the cell. The small ribosomal subunit (SSU) binds messenger RNAs (mRNAs) and translates the encoded message by selecting cognate aminoacyl-transfer RNA (tRNA) molecules. The large subunit (LSU) contains the ribosomal catalytic site termed the peptidyl transferase center (PTC), which catalyzes the formation of peptide bonds, thereby polymerizing the amino acids delivered by tRNAs into a polypeptide chain. The nascent polypeptides leave the ribosome through a tunnel in the LSU and interact with protein factors that function in enzymatic processing, targeting, and the membrane insertion of nascent chains at the exit of the ribosomal tunnel. In Schizosaccharomyces pombe (strain 972 / ATCC 24843) (Fission yeast), this protein is Large ribosomal subunit protein eL34A (rpl3401).